We begin with the raw amino-acid sequence, 446 residues long: C-type lectin domain family 18 member C (446 aa).

An N-terminal signal peptide occupies residues 1–26 (MLHPETSPGRGHLLAVLLALLGTAWA). In terms of domain architecture, SCP spans 52-182 (LSLHNRLRSW…AAIEAFVCAY (131 aa)). N-linked (GlcNAc...) asparagine glycosylation occurs at N144. An EGF-like domain is found at 228 to 261 (PRNPCRMSCQNHGRLNISTCHCHCPPGYTGRYCQ). 4 disulfides stabilise this stretch: C236/C249, C251/C260, C327/C432, and C408/C424. Residues 306-433 (IDGDCFMVSS…CKTRNRYICQ (128 aa)) enclose the C-type lectin domain.

As to expression, detected in peripheral blood cells.

The protein localises to the secreted. Its subcellular location is the endoplasmic reticulum. It is found in the golgi apparatus. The protein resides in the endosome. In terms of biological role, binds polysaccharidesin a Ca(2+)-independent manner with a preferentially binding to fucoidan, beta-glucans and galactans. This chain is C-type lectin domain family 18 member C (CLEC18C), found in Homo sapiens (Human).